The chain runs to 108 residues: Large ribosomal subunit protein uL23 (108 aa).

This sequence belongs to the universal ribosomal protein uL23 family. As to quaternary structure, part of the 50S ribosomal subunit. Contacts protein L29, and trigger factor when it is bound to the ribosome.

In terms of biological role, one of the early assembly proteins it binds 23S rRNA. One of the proteins that surrounds the polypeptide exit tunnel on the outside of the ribosome. Forms the main docking site for trigger factor binding to the ribosome. The sequence is that of Large ribosomal subunit protein uL23 from Polaromonas sp. (strain JS666 / ATCC BAA-500).